The following is a 729-amino-acid chain: Solute carrier family 15 member 2 (729 aa).

The interval 1 to 34 (MNPFQKNESKETLFSPVSIEEVPPRPPSPPKKPS) is disordered. Over 1–57 (MNPFQKNESKETLFSPVSIEEVPPRPPSPPKKPSPTICGSNYPLSIAFIVVNEFCER) the chain is Cytoplasmic. At Ser-9 the chain carries Phosphoserine. Position 12 is a phosphothreonine (Thr-12). Over residues 24–33 (PRPPSPPKKP) the composition is skewed to pro residues. At Ser-28 the chain carries Phosphoserine. The helical transmembrane segment at 58-78 (FSYYGMKAVLILYFLYFLHWN) threads the bilayer. Topologically, residues 79 to 83 (EDTST) are extracellular. The helical transmembrane segment at 84–104 (SIYHAFSSLCYFTPILGAAIA) threads the bilayer. The Cytoplasmic segment spans residues 105–113 (DSWLGKFKT). The chain crosses the membrane as a helical span at residues 114-134 (IIYLSLVYVLGHVIKSLGALP). Residues 135–139 (ILGGQ) are Extracellular-facing. A helical membrane pass occupies residues 140-160 (VVHTVLSLIGLSLIALGTGGI). Topologically, residues 161 to 183 (KPCVAAFGGDQFEEKHAEERTRY) are cytoplasmic. Residues 184-204 (FSVFYLSINAGSLISTFITPM) traverse the membrane as a helical segment. The Extracellular portion of the chain corresponds to 205 to 217 (LRGDVQCFGEDCY). A helical membrane pass occupies residues 218–238 (ALAFGVPGLLMVIALVVFAMG). Residues 239-295 (SKIYNKPPPEGNIVAQVFKCIWFAISNRFKNRSGDIPKRQHWLDWAAEKYPKQLIMD) lie on the Cytoplasmic side of the membrane. Residues 296–316 (VKALTRVLFLYIPLPMFWALL) traverse the membrane as a helical segment. At 317–343 (DQQGSRWTLQAIRMNRNLGFFVLQPDQ) the chain is on the extracellular side. The chain crosses the membrane as a helical span at residues 344-364 (MQVLNPLLVLIFIPLFDFVIY). Residues 365-380 (RLVSKCGINFSSLRKM) are Cytoplasmic-facing. The chain crosses the membrane as a helical span at residues 381-401 (AVGMILACLAFAVAAAVEIKI). The Extracellular segment spans residues 402–611 (NEMAPAQPGP…PANKMSIAWQ (210 aa)). Positions 402 to 611 (NEMAPAQPGP…PANKMSIAWQ (210 aa)) are extracellular domain (ECD). Residues Asn-435, Asn-472, Asn-528, Asn-567, and Asn-587 are each glycosylated (N-linked (GlcNAc...) asparagine). The chain crosses the membrane as a helical span at residues 612–632 (LPQYALVTAGEVMFSVTGLEF). Residues 633 to 643 (SYSQAPSSMKS) are Cytoplasmic-facing. The helical transmembrane segment at 644 to 664 (VLQAAWLLTIAVGNIIVLVVA) threads the bilayer. The Extracellular portion of the chain corresponds to 665 to 674 (QFSGLVQWAE). A helical transmembrane segment spans residues 675-695 (FILFSCLLLVICLIFSIMGYY). Over 696–729 (YVPVKTEDMRGPADKHIPHIQGNMIKLETKKTKL) the chain is Cytoplasmic.

Belongs to the major facilitator superfamily. Proton-dependent oligopeptide transporter (POT/PTR) (TC 2.A.17) family. As to quaternary structure, interacts (via extracellular domain region) with trypsin. In terms of tissue distribution, expressed in kidney. Not detected in intestine. Highly expressed in macrophages.

Its subcellular location is the apical cell membrane. The protein resides in the cytoplasmic vesicle. It is found in the phagosome membrane. The protein localises to the cell membrane. It catalyses the reaction a dipeptide(out) + 2 H(+)(out) = a dipeptide(in) + 2 H(+)(in). The catalysed reaction is N-acetyl-D-muramoyl-L-alanyl-D-isoglutamine(out) + 3 H(+)(out) = N-acetyl-D-muramoyl-L-alanyl-D-isoglutamine(in) + 3 H(+)(in). It carries out the reaction glycyl-L-leucine(out) + 2 H(+)(out) = glycyl-L-leucine(in) + 2 H(+)(in). The enzyme catalyses glycyl-L-lysine(out) + 2 H(+)(out) = glycyl-L-lysine(in) + 2 H(+)(in). It catalyses the reaction glycyl-L-glutamate(out) + 3 H(+)(out) = glycyl-L-glutamate(in) + 3 H(+)(in). The catalysed reaction is L-alanyl-L-alanine(out) + 2 H(+)(out) = L-alanyl-L-alanine(in) + 2 H(+)(in). It carries out the reaction an L-amino acid tripeptide(out) + 2 H(+)(out) = an L-amino acid tripeptide(in) + 2 H(+)(in). The enzyme catalyses carnosine(out) + 2 H(+)(out) = carnosine(in) + 2 H(+)(in). In terms of biological role, proton-coupled amino-acid transporter that transports oligopeptides of 2 to 4 amino acids with a preference for dipeptides. Transports neutral and anionic dipeptides with a proton to peptide stoichiometry of 2:1 or 3:1. In kidney, involved in the absorption of circulating di- and tripeptides from the glomerular filtrate. Can also transport beta-lactam antibiotics, such as the aminocephalosporin cefadroxil, and other antiviral and anticancer drugs. Transports the dipeptide-like aminopeptidase inhibitor bestatin. Also able to transport carnosine. Involved in innate immunity by promoting the detection of microbial pathogens by NOD-like receptors (NLRs). Mediates transport of bacterial peptidoglycans across the plasma membrane or, in macrophages, the phagosome membrane: catalyzes the transport of certain bacterial peptidoglycans, such as muramyl dipeptide (MDP), the NOD2 ligand. This Homo sapiens (Human) protein is Solute carrier family 15 member 2.